The primary structure comprises 384 residues: Anhydro-N-acetylmuramic acid kinase (384 aa).

9–16 contributes to the ATP binding site; it reads GTSYDAID.

This sequence belongs to the anhydro-N-acetylmuramic acid kinase family.

The enzyme catalyses 1,6-anhydro-N-acetyl-beta-muramate + ATP + H2O = N-acetyl-D-muramate 6-phosphate + ADP + H(+). It functions in the pathway amino-sugar metabolism; 1,6-anhydro-N-acetylmuramate degradation. It participates in cell wall biogenesis; peptidoglycan recycling. In terms of biological role, catalyzes the specific phosphorylation of 1,6-anhydro-N-acetylmuramic acid (anhMurNAc) with the simultaneous cleavage of the 1,6-anhydro ring, generating MurNAc-6-P. Is required for the utilization of anhMurNAc either imported from the medium or derived from its own cell wall murein, and thus plays a role in cell wall recycling. The protein is Anhydro-N-acetylmuramic acid kinase of Streptomyces avermitilis (strain ATCC 31267 / DSM 46492 / JCM 5070 / NBRC 14893 / NCIMB 12804 / NRRL 8165 / MA-4680).